Reading from the N-terminus, the 78-residue chain is Large ribosomal subunit protein bL28 (78 aa).

Residues 1 to 30 (MAAHCQVTGAGPGFGHSISHSHRRTKRRFD) are disordered.

It belongs to the bacterial ribosomal protein bL28 family.

In Micrococcus luteus (strain ATCC 4698 / DSM 20030 / JCM 1464 / CCM 169 / CCUG 5858 / IAM 1056 / NBRC 3333 / NCIMB 9278 / NCTC 2665 / VKM Ac-2230) (Micrococcus lysodeikticus), this protein is Large ribosomal subunit protein bL28.